We begin with the raw amino-acid sequence, 214 residues long: Ribonuclease HII (214 aa).

The region spanning 26-214 is the RNase H type-2 domain; that stretch reads EIVCGVDEAG…PVRAALDLIR (189 aa). Asp32, Glu33, and Asp124 together coordinate a divalent metal cation.

This sequence belongs to the RNase HII family. Mn(2+) is required as a cofactor. Mg(2+) serves as cofactor.

The protein resides in the cytoplasm. The enzyme catalyses Endonucleolytic cleavage to 5'-phosphomonoester.. In terms of biological role, endonuclease that specifically degrades the RNA of RNA-DNA hybrids. This is Ribonuclease HII from Burkholderia lata (strain ATCC 17760 / DSM 23089 / LMG 22485 / NCIMB 9086 / R18194 / 383).